The primary structure comprises 340 residues: uncharacterized protein (340 aa).

The helical transmembrane segment at 6 to 26 threads the bilayer; the sequence is ITFGLLVLMVCVILFVLYVQL.

The protein resides in the cell membrane. This is an uncharacterized protein from Bacillus subtilis (strain 168).